The sequence spans 360 residues: Protein phosphatase 1L (360 aa).

The Extracellular portion of the chain corresponds to Met1–Thr25. A helical transmembrane segment spans residues Leu26–Thr42. Over Asp43–Gln360 the chain is Cytoplasmic. A PPM-type phosphatase domain is found at Asn92 to Phe351. Positions 128, 129, 302, and 342 each coordinate Mn(2+).

It belongs to the PP2C family. In terms of assembly, interacts with MAP3K7/TAK1 and MAP3K5. The cofactor is Mg(2+). Mn(2+) is required as a cofactor.

It is found in the membrane. It catalyses the reaction O-phospho-L-seryl-[protein] + H2O = L-seryl-[protein] + phosphate. The catalysed reaction is O-phospho-L-threonyl-[protein] + H2O = L-threonyl-[protein] + phosphate. Acts as a suppressor of the SAPK signaling pathways by associating with and dephosphorylating MAP3K7/TAK1 and MAP3K5, and by attenuating the association between MAP3K7/TAK1 and MAP2K4 or MAP2K6. The sequence is that of Protein phosphatase 1L (PPM1L) from Bos taurus (Bovine).